We begin with the raw amino-acid sequence, 94 residues long: Putative pterin-4-alpha-carbinolamine dehydratase (94 aa).

This sequence belongs to the pterin-4-alpha-carbinolamine dehydratase family.

The catalysed reaction is (4aS,6R)-4a-hydroxy-L-erythro-5,6,7,8-tetrahydrobiopterin = (6R)-L-erythro-6,7-dihydrobiopterin + H2O. The chain is Putative pterin-4-alpha-carbinolamine dehydratase from Mycobacterium tuberculosis (strain ATCC 25177 / H37Ra).